Consider the following 342-residue polypeptide: Succinylglutamate desuccinylase (342 aa).

3 residues coordinate Zn(2+): His-63, Glu-66, and His-155. Glu-219 is an active-site residue.

The protein belongs to the AspA/AstE family. Succinylglutamate desuccinylase subfamily. Zn(2+) is required as a cofactor.

The enzyme catalyses N-succinyl-L-glutamate + H2O = L-glutamate + succinate. It functions in the pathway amino-acid degradation; L-arginine degradation via AST pathway; L-glutamate and succinate from L-arginine: step 5/5. Functionally, transforms N(2)-succinylglutamate into succinate and glutamate. In Vibrio cholerae serotype O1 (strain ATCC 39315 / El Tor Inaba N16961), this protein is Succinylglutamate desuccinylase.